Here is a 127-residue protein sequence, read N- to C-terminus: UPF0102 protein Gura_3756 (127 aa).

Belongs to the UPF0102 family.

This Geotalea uraniireducens (strain Rf4) (Geobacter uraniireducens) protein is UPF0102 protein Gura_3756.